The chain runs to 258 residues: 1-(5-phosphoribosyl)-5-[(5-phosphoribosylamino)methylideneamino] imidazole-4-carboxamide isomerase (258 aa).

Asp-17 functions as the Proton acceptor in the catalytic mechanism. The active-site Proton donor is the Asp-136.

Belongs to the HisA/HisF family.

It is found in the cytoplasm. The enzyme catalyses 1-(5-phospho-beta-D-ribosyl)-5-[(5-phospho-beta-D-ribosylamino)methylideneamino]imidazole-4-carboxamide = 5-[(5-phospho-1-deoxy-D-ribulos-1-ylimino)methylamino]-1-(5-phospho-beta-D-ribosyl)imidazole-4-carboxamide. It participates in amino-acid biosynthesis; L-histidine biosynthesis; L-histidine from 5-phospho-alpha-D-ribose 1-diphosphate: step 4/9. The polypeptide is 1-(5-phosphoribosyl)-5-[(5-phosphoribosylamino)methylideneamino] imidazole-4-carboxamide isomerase (Corynebacterium jeikeium (strain K411)).